The following is a 291-amino-acid chain: Protease HtpX homolog (291 aa).

2 consecutive transmembrane segments (helical) span residues 4–24 (IALF…TASL) and 38–58 (LGAL…ISLL). His-144 is a Zn(2+) binding site. Glu-145 is a catalytic residue. His-148 is a Zn(2+) binding site. 2 helical membrane passes run 159–179 (LIQG…GYFI) and 197–217 (VTTV…VAWF). Residue Glu-222 coordinates Zn(2+).

This sequence belongs to the peptidase M48B family. Requires Zn(2+) as cofactor.

It localises to the cell inner membrane. This Leptothrix cholodnii (strain ATCC 51168 / LMG 8142 / SP-6) (Leptothrix discophora (strain SP-6)) protein is Protease HtpX homolog.